The primary structure comprises 119 residues: Fluoride-specific ion channel FluC 1 (119 aa).

The next 4 helical transmembrane spans lie at 6-26, 31-51, 66-86, and 91-111; these read VALVAGGGFAGALCRHGIAVV, FPWGTLVVNVAGAFLLGAIVY, VVATGFLSSFTTYSTFAGETI, and RLAALNVVGNYALGFVAVLVA.

It belongs to the fluoride channel Fluc/FEX (TC 1.A.43) family.

The protein resides in the cell membrane. It carries out the reaction fluoride(in) = fluoride(out). Fluoride-specific ion channel. Important for reducing fluoride concentration in the cell, thus reducing its toxicity. The sequence is that of Fluoride-specific ion channel FluC 1 from Natronomonas pharaonis (strain ATCC 35678 / DSM 2160 / CIP 103997 / JCM 8858 / NBRC 14720 / NCIMB 2260 / Gabara) (Halobacterium pharaonis).